A 501-amino-acid polypeptide reads, in one-letter code: Ribose import ATP-binding protein RbsA (501 aa).

2 ABC transporter domains span residues 5–241 (LQLK…VGRK) and 252–495 (APGE…VGKL). An ATP-binding site is contributed by 37 to 44 (GENGAGKS).

This sequence belongs to the ABC transporter superfamily. Ribose importer (TC 3.A.1.2.1) family. In terms of assembly, the complex is composed of an ATP-binding protein (RbsA), two transmembrane proteins (RbsC) and a solute-binding protein (RbsB).

The protein localises to the cell inner membrane. The enzyme catalyses D-ribose(out) + ATP + H2O = D-ribose(in) + ADP + phosphate + H(+). Its function is as follows. Part of the ABC transporter complex RbsABC involved in ribose import. Responsible for energy coupling to the transport system. This Salmonella typhimurium (strain LT2 / SGSC1412 / ATCC 700720) protein is Ribose import ATP-binding protein RbsA.